Reading from the N-terminus, the 380-residue chain is Glucose-1-phosphate adenylyltransferase (380 aa).

Alpha-D-glucose 1-phosphate contacts are provided by residues glycine 164, 179-180 (EK), and serine 190.

It belongs to the bacterial/plant glucose-1-phosphate adenylyltransferase family. As to quaternary structure, homotetramer.

It catalyses the reaction alpha-D-glucose 1-phosphate + ATP + H(+) = ADP-alpha-D-glucose + diphosphate. The protein operates within glycan biosynthesis; glycogen biosynthesis. Functionally, involved in the biosynthesis of ADP-glucose, a building block required for the elongation reactions to produce glycogen. Catalyzes the reaction between ATP and alpha-D-glucose 1-phosphate (G1P) to produce pyrophosphate and ADP-Glc. The sequence is that of Glucose-1-phosphate adenylyltransferase from Lactococcus lactis subsp. lactis (strain IL1403) (Streptococcus lactis).